Reading from the N-terminus, the 171-residue chain is 3-hydroxydecanoyl-[acyl-carrier-protein] dehydratase (171 aa).

Residue His-71 is part of the active site.

This sequence belongs to the thioester dehydratase family. FabA subfamily. Homodimer.

It is found in the cytoplasm. It catalyses the reaction a (3R)-hydroxyacyl-[ACP] = a (2E)-enoyl-[ACP] + H2O. The enzyme catalyses (3R)-hydroxydecanoyl-[ACP] = (2E)-decenoyl-[ACP] + H2O. It carries out the reaction (2E)-decenoyl-[ACP] = (3Z)-decenoyl-[ACP]. It participates in lipid metabolism; fatty acid biosynthesis. Functionally, necessary for the introduction of cis unsaturation into fatty acids. Catalyzes the dehydration of (3R)-3-hydroxydecanoyl-ACP to E-(2)-decenoyl-ACP and then its isomerization to Z-(3)-decenoyl-ACP. Can catalyze the dehydratase reaction for beta-hydroxyacyl-ACPs with saturated chain lengths up to 16:0, being most active on intermediate chain length. The sequence is that of 3-hydroxydecanoyl-[acyl-carrier-protein] dehydratase from Agrobacterium fabrum (strain C58 / ATCC 33970) (Agrobacterium tumefaciens (strain C58)).